We begin with the raw amino-acid sequence, 156 residues long: 6,7-dimethyl-8-ribityllumazine synthase (156 aa).

5-amino-6-(D-ribitylamino)uracil contacts are provided by residues Phe23, 57-59, and 81-83; these read AFE and AVI. Residue 86–87 participates in (2S)-2-hydroxy-3-oxobutyl phosphate binding; it reads ST. The Proton donor role is filled by His89. Phe114 serves as a coordination point for 5-amino-6-(D-ribitylamino)uracil. Arg128 is a binding site for (2S)-2-hydroxy-3-oxobutyl phosphate.

This sequence belongs to the DMRL synthase family.

The enzyme catalyses (2S)-2-hydroxy-3-oxobutyl phosphate + 5-amino-6-(D-ribitylamino)uracil = 6,7-dimethyl-8-(1-D-ribityl)lumazine + phosphate + 2 H2O + H(+). The protein operates within cofactor biosynthesis; riboflavin biosynthesis; riboflavin from 2-hydroxy-3-oxobutyl phosphate and 5-amino-6-(D-ribitylamino)uracil: step 1/2. In terms of biological role, catalyzes the formation of 6,7-dimethyl-8-ribityllumazine by condensation of 5-amino-6-(D-ribitylamino)uracil with 3,4-dihydroxy-2-butanone 4-phosphate. This is the penultimate step in the biosynthesis of riboflavin. This is 6,7-dimethyl-8-ribityllumazine synthase from Brachyspira hyodysenteriae (strain ATCC 49526 / WA1).